Consider the following 710-residue polypeptide: Homeobox-leucine zipper protein ROC8 (710 aa).

A disordered region spans residues 1–23 (MDFGDEPEGSDSQRRRKRYHRHT). The segment covering 14–23 (RRRKRYHRHT) has biased composition (basic residues). A DNA-binding region (homeobox) is located at residues 15–74 (RRKRYHRHTPRQIQQLEAMFKECPHPDENQRAQLSRELGLEPRQIKFWFQNRRTQMKAQH). Positions 82–144 (LRAENDKIRC…DRVSNLTSKY (63 aa)) form a coiled coil. The START domain maps to 197-440 (SDMERPMMAE…LQRACERYAS (244 aa)). Low complexity predominate over residues 630-648 (RPGSAAGASTSSAGPLAAA). A disordered region spans residues 630–650 (RPGSAAGASTSSAGPLAAARG).

It belongs to the HD-ZIP homeobox family. Class IV subfamily.

It is found in the nucleus. Functionally, probable transcription factor. This chain is Homeobox-leucine zipper protein ROC8 (ROC8), found in Oryza sativa subsp. japonica (Rice).